The chain runs to 2131 residues: Sodium channel protein para (2131 aa).

Residues Met-1–Tyr-148 are Cytoplasmic-facing. Residues His-35 to Gly-48 are compositionally biased toward basic and acidic residues. Residues His-35 to Pro-84 form a disordered region. A compositionally biased stretch (acidic residues) spans Tyr-64–Pro-73. One copy of the I repeat lies at Trp-134–Arg-467. The helical transmembrane segment at Ile-149–Met-172 threads the bilayer. Residues Pro-173–Ser-180 lie on the Extracellular side of the membrane. The chain crosses the membrane as a helical span at residues Thr-181–Ala-199. At Arg-200 to Asp-212 the chain is on the cytoplasmic side. Residues Ala-213–Ile-231 form a helical membrane-spanning segment. At Asp-232 to Ala-237 the chain is on the extracellular side. The chain crosses the membrane as a helical; Voltage-sensor span at residues Ala-238–Leu-257. Topologically, residues Lys-258 to Asp-273 are cytoplasmic. Residues Val-274–Leu-297 form a helical membrane-spanning segment. At Thr-298 to Ser-373 the chain is on the extracellular side. Cys-301 and Cys-350 are joined by a disulfide. Asn-313, Asn-325, and Asn-343 each carry an N-linked (GlcNAc...) asparagine glycan. An intramembrane region (pore-forming) is located at residues Phe-374–Leu-398. The Extracellular segment spans residues Arg-399–His-405. The chain crosses the membrane as a helical span at residues Met-406 to Ile-427. At Val-428–Ser-812 the chain is on the cytoplasmic side. Ser-553 and Ser-570 each carry phosphoserine; by PKA. Disordered stretches follow at residues Ser-553 to Ser-572 and Lys-671 to Gly-691. The segment covering Thr-680–Gly-691 has biased composition (polar residues). An II repeat occupies Asp-799–Arg-1069. Residues Leu-813 to Met-837 form a helical membrane-spanning segment. The Extracellular segment spans residues Asp-838–Arg-848. A helical transmembrane segment spans residues Val-849–Ser-873. The Cytoplasmic segment spans residues Pro-874–Glu-880. A helical transmembrane segment spans residues Gly-881–Glu-900. Residues Gly-901 to Ser-906 lie on the Extracellular side of the membrane. The chain crosses the membrane as a helical; Voltage-sensor span at residues Val-907–Leu-926. At Asn-927–Gly-941 the chain is on the cytoplasmic side. Residues Asn-942 to Gly-963 traverse the membrane as a helical segment. The Extracellular segment spans residues Lys-964–Asp-985. Asn-982 is a glycosylation site (N-linked (GlcNAc...) asparagine). An intramembrane region (pore-forming) is located at residues Phe-986–Trp-1006. At Asp-1007–Asp-1013 the chain is on the extracellular side. A disulfide bridge connects residues Cys-1008 and Cys-1016. Residues Val-1014–Ser-1041 traverse the membrane as a helical segment. Over Asn-1042–Gln-1296 the chain is Cytoplasmic. Residues Asp-1166–Gly-1240 are disordered. The span at Tyr-1177–Ser-1194 shows a compositional bias: polar residues. Positions Pro-1199–Leu-1225 are enriched in basic and acidic residues. Residues Gly-1226–Gly-1240 show a composition bias toward acidic residues. The stretch at Trp-1284–Lys-1591 is one III repeat. Residues Leu-1297–Leu-1320 traverse the membrane as a helical segment. The Extracellular segment spans residues Glu-1321–Ile-1334. A helical transmembrane segment spans residues Leu-1335–Phe-1359. Topologically, residues Lys-1360–Asn-1365 are cytoplasmic. A helical transmembrane segment spans residues Ala-1366 to Val-1387. Residues Gly-1388–Gly-1391 lie on the Extracellular side of the membrane. A helical; Voltage-sensor membrane pass occupies residues Ile-1392 to Met-1413. The Cytoplasmic segment spans residues Gln-1414 to Asn-1432. Residues Val-1433 to Gly-1454 traverse the membrane as a helical segment. The Extracellular segment spans residues Lys-1455 to Val-1495. Asn-1463 and Asn-1482 each carry an N-linked (GlcNAc...) asparagine glycan. An intramembrane region (pore-forming) is located at residues Gly-1496–Asp-1517. At Ala-1518 to Asn-1533 the chain is on the extracellular side. The chain crosses the membrane as a helical span at residues Ile-1534–Ile-1560. Residues Asp-1561–Glu-1614 lie on the Cytoplasmic side of the membrane. An IV repeat occupies Ile-1601–Asn-1862. Residues Ile-1615–Leu-1638 traverse the membrane as a helical segment. Residues Asp-1639–Ala-1649 are Extracellular-facing. The helical transmembrane segment at Val-1650–Leu-1673 threads the bilayer. The Cytoplasmic segment spans residues Arg-1674–Ile-1679. A helical membrane pass occupies residues Glu-1680–Ile-1703. The Extracellular segment spans residues Glu-1704–Leu-1713. The chain crosses the membrane as a helical; Voltage-sensor span at residues Arg-1714 to Arg-1735. The Cytoplasmic segment spans residues Thr-1736 to Asn-1750. The chain crosses the membrane as a helical span at residues Ile-1751–Val-1773. Residues Lys-1774 to Thr-1787 are Extracellular-facing. Positions Phe-1788 to Ala-1810 form an intramembrane region, pore-forming. The Extracellular portion of the chain corresponds to Ile-1811 to Val-1835. Residues Gly-1836 to Leu-1860 traverse the membrane as a helical segment. Topologically, residues Glu-1861–Val-2131 are cytoplasmic. The 36-residue stretch at Asp-1877 to Pro-1912 folds into the EF-hand domain. The segment at His-2001 to Arg-2096 is disordered. The segment covering Gly-2021–Asp-2035 has biased composition (acidic residues). A compositionally biased stretch (low complexity) spans Ala-2068 to Ser-2088.

The protein belongs to the sodium channel (TC 1.A.1.10) family. Para subfamily.

It is found in the cell membrane. Functionally, mediates the voltage-dependent sodium ion permeability of excitable membranes. Assuming opened or closed conformations in response to the voltage difference across the membrane, the protein forms a sodium-selective channel through which Na(+) ions may pass in accordance with their electrochemical gradient. The protein is Sodium channel protein para (para) of Drosophila melanogaster (Fruit fly).